The following is a 203-amino-acid chain: dITP/XTP pyrophosphatase (203 aa).

16-21 (SHNRGK) provides a ligand contact to substrate. The Mg(2+) site is built by Glu-48 and Asp-77. Asp-77 (proton acceptor) is an active-site residue. Residues Ser-78, 161–164 (FGYD), Lys-184, and 189–190 (HR) each bind substrate.

Belongs to the HAM1 NTPase family. As to quaternary structure, homodimer. The cofactor is Mg(2+).

The catalysed reaction is XTP + H2O = XMP + diphosphate + H(+). The enzyme catalyses dITP + H2O = dIMP + diphosphate + H(+). It catalyses the reaction ITP + H2O = IMP + diphosphate + H(+). Its function is as follows. Pyrophosphatase that catalyzes the hydrolysis of nucleoside triphosphates to their monophosphate derivatives, with a high preference for the non-canonical purine nucleotides XTP (xanthosine triphosphate), dITP (deoxyinosine triphosphate) and ITP. Seems to function as a house-cleaning enzyme that removes non-canonical purine nucleotides from the nucleotide pool, thus preventing their incorporation into DNA/RNA and avoiding chromosomal lesions. The protein is dITP/XTP pyrophosphatase of Rhodospirillum centenum (strain ATCC 51521 / SW).